The sequence spans 350 residues: Glucose-6-phosphate 3-dehydrogenase (350 aa).

Belongs to the Gfo/Idh/MocA family.

It catalyses the reaction D-glucose 6-phosphate + NAD(+) = 3-dehydro-D-glucose 6-phosphate + NADH + H(+). The protein operates within antibiotic biosynthesis; kanosamine biosynthesis. Involved in the biosynthesis of kanosamine (3-amino-3-deoxy-D-glucose), which is known to have antibiotic and antifungal properties, and to be a precursor of the antibiotic neotrehalosadiamine (3,3'-diamino-3,3'-dideoxy-alpha,beta-trehalose (NTD)). Catalyzes the oxidation of glucose 6-phosphate to 3-oxo-D-glucose 6-phosphate. It can only use NAD. The protein is Glucose-6-phosphate 3-dehydrogenase (ntdC) of Bacillus subtilis (strain 168).